We begin with the raw amino-acid sequence, 580 residues long: Anaphase-promoting complex subunit 7 (580 aa).

TPR repeat units follow at residues 50–83 (IISF…LFKV), 107–140 (YELK…SRGL), 141–175 (DTHL…CPLC), 253–286 (VLEK…DPYY), 321–354 (AETW…KESH), 356–388 (FAHS…SKNI), 390–421 (TARE…SPDY), 422–456 (SKTM…SPHC), 458–490 (DTVL…QETD), and 491–523 (LMHT…NPQY). A disordered region spans residues 539–580 (GIDPDQELDQENDDDDQEEGEGENDQEENDDDDNDDDDEYIS). Residues 542–580 (PDQELDQENDDDDQEEGEGENDQEENDDDDNDDDDEYIS) are compositionally biased toward acidic residues.

This sequence belongs to the APC7 family. As to quaternary structure, the APC/C is composed of at least 13 subunits that stay tightly associated throughout the cell cycle: anapc1, anapc2, anapc3, anapc4, anapc5, anapc6, anapc7, anapc8, anapc10, anapc11, cdc20, cdc26 and cdh1.

It is found in the nucleus. It participates in protein modification; protein ubiquitination. In terms of biological role, component of the anaphase promoting complex/cyclosome (APC/C), a cell cycle-regulated E3 ubiquitin-protein ligase complex that controls progression through mitosis and the G1 phase of the cell cycle. The chain is Anaphase-promoting complex subunit 7 (anapc7) from Dictyostelium discoideum (Social amoeba).